A 331-amino-acid chain; its full sequence is Major ferric iron-binding protein (331 aa).

The N-terminal stretch at 1–22 is a signal peptide; the sequence is MKTSIRYALLAAALTAATPALA. Residues His-31, Glu-79, Tyr-217, and Tyr-218 each coordinate Fe cation.

The protein belongs to the bacterial solute-binding protein 1 family.

It is found in the periplasm. This protein may be a central component in the iron-acquisition system. The protein is Major ferric iron-binding protein (fbpA) of Neisseria meningitidis serogroup A / serotype 4A (strain DSM 15465 / Z2491).